Reading from the N-terminus, the 156-residue chain is MKKEVIYLTKEGYEKLKTELDNLKQKLMFEIAERIKEARELGDLSENSEYQEAKNEQGRIAARINELENMLSKAEVIEGLDTNVINIGNWVIIKNLETGEEKTIQIVTPHEADVFNNKISFESPIGRILVGKKVGEVVKIKAPKGVFKYQILGIKV.

The stretch at 8-75 (LTKEGYEKLK…ELENMLSKAE (68 aa)) forms a coiled coil.

It belongs to the GreA/GreB family.

Its function is as follows. Necessary for efficient RNA polymerase transcription elongation past template-encoded arresting sites. The arresting sites in DNA have the property of trapping a certain fraction of elongating RNA polymerases that pass through, resulting in locked ternary complexes. Cleavage of the nascent transcript by cleavage factors such as GreA or GreB allows the resumption of elongation from the new 3'terminus. GreA releases sequences of 2 to 3 nucleotides. This is Transcription elongation factor GreA from Thermosipho melanesiensis (strain DSM 12029 / CIP 104789 / BI429).